A 228-amino-acid polypeptide reads, in one-letter code: Mitochondrial assembly of ribosomal large subunit protein 1 (228 aa).

The disordered stretch occupies residues 53–77; the sequence is SLTRGLHHGPQPEERTAGDARLQPG.

The protein belongs to the Iojap/RsfS family. Associates with the mitochondrial ribosome large subunit (39S) via interaction with MRPL12 and/or MRPL14. The interaction generates steric hindrance that is expected to prevent premature association of the 28S and 39S ribosomal subunits. Identified in a complex composed of MALSU1, MIEF1 upstream open reading frame protein and NDUFAB1; within the trimeric complex, MIEF1 upstream open reading frame protein functions as a bridging scaffold that interacts with MALSU1 on one side, and with NDUFAB1 on the other side. Interacts with MRPL12 and MRPL14.

Its subcellular location is the mitochondrion matrix. Required for normal mitochondrial ribosome function and mitochondrial translation. May play a role in ribosome biogenesis by preventing premature association of the 28S and 39S ribosomal subunits. Interacts with mitochondrial ribosomal protein uL14m (MRPL14), probably blocking formation of intersubunit bridge B8, preventing association of the 28S and 39S ribosomal subunits. Addition to isolated mitochondrial ribosomal subunits partially inhibits translation, probably by interfering with the association of the 28S and 39S ribosomal subunits and the formation of functional ribosomes. May also participate in the assembly and/or regulation of the stability of the large subunit of the mitochondrial ribosome. May function as a ribosomal silencing factor. The sequence is that of Mitochondrial assembly of ribosomal large subunit protein 1 (Malsu1) from Mus musculus (Mouse).